Reading from the N-terminus, the 234-residue chain is Endo-1,4-beta-xylanase 1 (234 aa).

The N-terminal stretch at 1–21 is a signal peptide; it reads MVSFIFTRIILFAAAINGAVA. N-linked (GlcNAc...) asparagine glycosylation is found at N25 and N75. In terms of domain architecture, GH11 spans 38–234; that stretch reads SGTPSSTGYS…SSGFSSITVA (197 aa). The active-site Nucleophile is the E124. N-linked (GlcNAc...) asparagine glycosylation occurs at N167. E221 (proton donor) is an active-site residue.

This sequence belongs to the glycosyl hydrolase 11 (cellulase G) family.

It localises to the secreted. The catalysed reaction is Endohydrolysis of (1-&gt;4)-beta-D-xylosidic linkages in xylans.. The protein operates within glycan degradation; xylan degradation. Functionally, endo-1,4-beta-xylanase involved in the hydrolysis of xylan, a major structural heterogeneous polysaccharide found in plant biomass representing the second most abundant polysaccharide in the biosphere, after cellulose. The polypeptide is Endo-1,4-beta-xylanase 1 (Xyn1) (Leucoagaricus gongylophorus (Leaf-cutting ant fungus)).